A 120-amino-acid chain; its full sequence is UPF0231 protein YacL (120 aa).

The protein belongs to the UPF0231 family.

The polypeptide is UPF0231 protein YacL (Salmonella typhi).